The chain runs to 437 residues: Eukaryotic peptide chain release factor subunit 1 (437 aa).

An N5-methylglutamine modification is found at Q182. A Glycyl lysine isopeptide (Lys-Gly) (interchain with G-Cter in ubiquitin) cross-link involves residue K331. Position 421 is a phosphoserine (S421).

This sequence belongs to the eukaryotic release factor 1 family. Component of the eRF1-eRF3-GTP ternary complex, composed of SUP45/eRF1, SUP35/eRF3 and GTP. Interacts with TPA1. In terms of processing, N5-methylated on Gln-182 by MTQ2.

It localises to the cytoplasm. In terms of biological role, component of the eRF1-eRF3-GTP ternary complex, a ternary complex that mediates translation termination in response to the termination codons. The eRF1-eRF3-GTP complex binds to a stop codon in the ribosomal A-site. SUP45/eRF1 is responsible for stop codon recognition and inducing hydrolysis of peptidyl-tRNA. Following GTP hydrolysis by SUP35/eRF3, SUP35/eRF3 dissociates, permitting SUP45/eRF1 to accommodate fully in the A-site and mediate hydrolysis of peptidyl-tRNA. The chain is Eukaryotic peptide chain release factor subunit 1 (SUP45) from Saccharomyces cerevisiae (strain ATCC 204508 / S288c) (Baker's yeast).